Reading from the N-terminus, the 485-residue chain is Rhamnulokinase (485 aa).

Residue 12-16 (ATSGR) coordinates ATP. Substrate contacts are provided by residues Gly-80 and 238–240 (HDT). The active-site Proton acceptor is Asp-239. Position 261 (Thr-261) interacts with ATP. Position 298 (Asn-298) interacts with substrate. An ATP-binding site is contributed by Glu-306. The cysteines at positions 355 and 372 are disulfide-linked. Gly-404 contributes to the ATP binding site.

This sequence belongs to the rhamnulokinase family. Mg(2+) serves as cofactor.

The enzyme catalyses L-rhamnulose + ATP = L-rhamnulose 1-phosphate + ADP + H(+). It functions in the pathway carbohydrate degradation; L-rhamnose degradation; glycerone phosphate from L-rhamnose: step 2/3. In terms of biological role, involved in the catabolism of L-rhamnose (6-deoxy-L-mannose). Catalyzes the transfer of the gamma-phosphate group from ATP to the 1-hydroxyl group of L-rhamnulose to yield L-rhamnulose 1-phosphate. The chain is Rhamnulokinase from Bacteroides thetaiotaomicron (strain ATCC 29148 / DSM 2079 / JCM 5827 / CCUG 10774 / NCTC 10582 / VPI-5482 / E50).